Reading from the N-terminus, the 207-residue chain is Pyridoxal 5'-phosphate synthase subunit PdxT (207 aa).

51-53 (GES) provides a ligand contact to L-glutamine. The Nucleophile role is filled by Cys83. Residues Arg112 and 143 to 144 (IR) contribute to the L-glutamine site. Active-site charge relay system residues include His184 and Glu186.

It belongs to the glutaminase PdxT/SNO family. In the presence of PdxS, forms a dodecamer of heterodimers. Only shows activity in the heterodimer.

The catalysed reaction is aldehydo-D-ribose 5-phosphate + D-glyceraldehyde 3-phosphate + L-glutamine = pyridoxal 5'-phosphate + L-glutamate + phosphate + 3 H2O + H(+). It carries out the reaction L-glutamine + H2O = L-glutamate + NH4(+). It functions in the pathway cofactor biosynthesis; pyridoxal 5'-phosphate biosynthesis. Functionally, catalyzes the hydrolysis of glutamine to glutamate and ammonia as part of the biosynthesis of pyridoxal 5'-phosphate. The resulting ammonia molecule is channeled to the active site of PdxS. This Kineococcus radiotolerans (strain ATCC BAA-149 / DSM 14245 / SRS30216) protein is Pyridoxal 5'-phosphate synthase subunit PdxT.